Reading from the N-terminus, the 258-residue chain is Alcohol dehydrogenase 2 (258 aa).

9-33 (IFVGGLGFIGYEACKQLMAKNMASF) contacts NAD(+). Residue Ser137 coordinates substrate. The Proton acceptor role is filled by Tyr150.

It belongs to the short-chain dehydrogenases/reductases (SDR) family. Homodimer.

The enzyme catalyses a primary alcohol + NAD(+) = an aldehyde + NADH + H(+). It carries out the reaction a secondary alcohol + NAD(+) = a ketone + NADH + H(+). This is Alcohol dehydrogenase 2 (ADH2) from Ceratitis capitata (Mediterranean fruit fly).